Consider the following 230-residue polypeptide: Ion-translocating oxidoreductase complex subunit E (230 aa).

6 helical membrane passes run 18–38 (ALVQ…ATNA), 39–59 (LGLG…VSAL), 63–83 (TPAE…VSAV), 86–106 (LINA…PLIV), 125–145 (WLSA…MFVL), and 182–202 (PFLL…MLAV).

It belongs to the NqrDE/RnfAE family. In terms of assembly, the complex is composed of six subunits: RsxA, RsxB, RsxC, RsxD, RsxE and RsxG.

The protein localises to the cell inner membrane. Functionally, part of a membrane-bound complex that couples electron transfer with translocation of ions across the membrane. Required to maintain the reduced state of SoxR. This chain is Ion-translocating oxidoreductase complex subunit E, found in Salmonella newport (strain SL254).